We begin with the raw amino-acid sequence, 259 residues long: MGRDMDFEELNSLQGIPKMIYDELIKNKKVNTFLKMSNIMAVGRLGYNDHGKTHAKIVANNAIKMLKILYKKGIEPSFVKDCKGSFEDSLVITLLGAYLHDIGNSVHRDIHHLHSAYLALDIVENILKKYYKEEKAYQMTTEVLHAIYSHSEGIMGLTIEAGVIAVADGTDMTKGRSRIPICKKCYDIHSVSAASIERVEIKEGDEKPIQIEVILSNEAGIFQIQEVLGEKIKWSGIKNYVSVYARVEKEKPVFEEITI.

Residues 51 to 173 enclose the HD domain; it reads GKTHAKIVAN…IAVADGTDMT (123 aa).

This is an uncharacterized protein from Methanocaldococcus jannaschii (strain ATCC 43067 / DSM 2661 / JAL-1 / JCM 10045 / NBRC 100440) (Methanococcus jannaschii).